A 686-amino-acid chain; its full sequence is Potassium-transporting ATPase ATP-binding subunit 2 (686 aa).

A run of 4 helical transmembrane segments spans residues 37–57, 64–84, 223–243, and 255–275; these read MFVV…PNLF, MILY…FANF, LLVS…PMAI, and VALT…AIGI. The active-site 4-aspartylphosphate intermediate is D306. Residues D343, E347, 376-383, and K395 each bind ATP; that span reads FTAQTRMS. D518 and D522 together coordinate Mg(2+). The next 3 helical transmembrane spans lie at 588-608, 616-636, and 656-676; these read FAII…LNIM, AILS…PLAM, and VYGV…DLVI.

The protein belongs to the cation transport ATPase (P-type) (TC 3.A.3) family. Type IA subfamily. As to quaternary structure, the system is composed of three essential subunits: KdpA, KdpB and KdpC.

The protein localises to the cell membrane. The enzyme catalyses K(+)(out) + ATP + H2O = K(+)(in) + ADP + phosphate + H(+). Functionally, part of the high-affinity ATP-driven potassium transport (or Kdp) system, which catalyzes the hydrolysis of ATP coupled with the electrogenic transport of potassium into the cytoplasm. This subunit is responsible for energy coupling to the transport system and for the release of the potassium ions to the cytoplasm. This Listeria innocua serovar 6a (strain ATCC BAA-680 / CLIP 11262) protein is Potassium-transporting ATPase ATP-binding subunit 2.